Consider the following 501-residue polypeptide: IQ domain-containing protein M (501 aa).

Over residues 237–247 (ERQPIKPEPKS) the composition is skewed to basic and acidic residues. Residues 237 to 262 (ERQPIKPEPKSQPRIKGTPNKTDKLD) are disordered. An IQ domain is found at 290–319 (LIRMVTVMQAHVRGWLERKRLQRVMTKALD).

This is IQ domain-containing protein M from Homo sapiens (Human).